The sequence spans 869 residues: Aconitate hydratase A (869 aa).

[4Fe-4S] cluster contacts are provided by Cys-411, Cys-477, and Cys-480.

The protein belongs to the aconitase/IPM isomerase family. As to quaternary structure, monomer. [4Fe-4S] cluster is required as a cofactor.

It carries out the reaction citrate = D-threo-isocitrate. The catalysed reaction is (2S,3R)-3-hydroxybutane-1,2,3-tricarboxylate = 2-methyl-cis-aconitate + H2O. The protein operates within carbohydrate metabolism; tricarboxylic acid cycle; isocitrate from oxaloacetate: step 2/2. Its pathway is organic acid metabolism; propanoate degradation. Functionally, involved in the catabolism of short chain fatty acids (SCFA) via the tricarboxylic acid (TCA)(acetyl degradation route) and the 2-methylcitrate cycle I (propionate degradation route). Catalyzes the reversible isomerization of citrate to isocitrate via cis-aconitate. Could catalyze the hydration of 2-methyl-cis-aconitate to yield (2S,3R)-2-methylisocitrate. The apo form of AcnA functions as a RNA-binding regulatory protein. The protein is Aconitate hydratase A of Cupriavidus necator (Alcaligenes eutrophus).